We begin with the raw amino-acid sequence, 551 residues long: Probable 4-coumarate--CoA ligase 2 (551 aa).

Positions 205, 206, 207, 208, 209, and 213 each coordinate ATP. 2 residues coordinate (E)-4-coumaroyl-AMP: Y253 and T257. K274 is a CoA binding site. The tract at residues 276–346 (EFVRFLDLIQ…RFKGKLIIKQ (71 aa)) is SBD1. A323, Q346, G347, and T351 together coordinate (E)-4-coumaroyl-AMP. Q346, G347, T351, D430, and R445 together coordinate ATP. The SBD2 stretch occupies residues 347-409 (GYGATELSPA…IKGPNVMLGY (63 aa)). (E)-4-coumaroyl-AMP contacts are provided by K447 and K451. CoA contacts are provided by K453 and G454. K537 contributes to the ATP binding site.

This sequence belongs to the ATP-dependent AMP-binding enzyme family. The cofactor is Mg(2+).

It carries out the reaction (E)-4-coumarate + ATP + CoA = (E)-4-coumaroyl-CoA + AMP + diphosphate. The catalysed reaction is (E)-4-coumarate + ATP + H(+) = (E)-4-coumaroyl-AMP + diphosphate. It catalyses the reaction (E)-4-coumaroyl-AMP + CoA = (E)-4-coumaroyl-CoA + AMP + H(+). The protein operates within phytoalexin biosynthesis; 3,4',5-trihydroxystilbene biosynthesis; 3,4',5-trihydroxystilbene from trans-4-coumarate: step 1/2. Functionally, carboxylate--CoA ligase that may use 4-coumarate as substrate. Follows a two-step reaction mechanism, wherein the carboxylate substrate first undergoes adenylation by ATP, followed by a thioesterification in the presence of CoA to yield the final CoA thioester. The protein is Probable 4-coumarate--CoA ligase 2 (4cl2) of Dictyostelium discoideum (Social amoeba).